Here is a 505-residue protein sequence, read N- to C-terminus: Lysine--tRNA ligase (505 aa).

The Mg(2+) site is built by E415 and E422.

Belongs to the class-II aminoacyl-tRNA synthetase family. In terms of assembly, homodimer. The cofactor is Mg(2+).

The protein localises to the cytoplasm. The catalysed reaction is tRNA(Lys) + L-lysine + ATP = L-lysyl-tRNA(Lys) + AMP + diphosphate. This Shigella dysenteriae serotype 1 (strain Sd197) protein is Lysine--tRNA ligase.